The primary structure comprises 577 residues: Sensor histidine kinase YesM (577 aa).

The Cytoplasmic portion of the chain corresponds to 1-17; sequence MKKRVAGWYRRMKIKDK. A helical membrane pass occupies residues 18–38; the sequence is LFVFLSLIMAVSFLFVYSGVQ. Topologically, residues 39 to 286 are extracellular; the sequence is YAFHVYDEQI…PFDQMFAKIS (248 aa). Residues 287–307 traverse the membrane as a helical segment; it reads FMKTVIGTCFLLFFCVVLLFG. The Cytoplasmic portion of the chain corresponds to 308–577; that stretch reads RKIANSITEP…ITIPCRNEVV (270 aa). The region spanning 312–368 is the HAMP domain; it reads NSITEPIEQLVTAMKSVQHSGIEAGVSLSLPEHTQDEAGMLNRHFTVMMKRINELME. Positions 365–574 constitute a Histidine kinase domain; sequence ELMEENVEKQ…RIVITIPCRN (210 aa). H392 is modified (phosphohistidine; by autocatalysis).

Its subcellular location is the cell membrane. It catalyses the reaction ATP + protein L-histidine = ADP + protein N-phospho-L-histidine.. In terms of biological role, member of the two-component regulatory system YesM/YesN. Probably activates YesN by phosphorylation. The chain is Sensor histidine kinase YesM (yesM) from Bacillus subtilis (strain 168).